The chain runs to 374 residues: Alcohol dehydrogenase class-3 (374 aa).

Residue alanine 2 is modified to N-acetylalanine. Zn(2+)-binding residues include cysteine 45, histidine 67, cysteine 97, cysteine 100, cysteine 103, cysteine 111, and cysteine 174. Residue lysine 233 is modified to N6-succinyllysine. Serine 247 is subject to Phosphoserine. Lysine 315 carries the N6-succinyllysine modification. Phosphoserine occurs at positions 324 and 351.

This sequence belongs to the zinc-containing alcohol dehydrogenase family. Class-III subfamily. In terms of assembly, homodimer. Zn(2+) serves as cofactor. Ubiquitous.

Its subcellular location is the cytoplasm. It carries out the reaction a primary alcohol + NAD(+) = an aldehyde + NADH + H(+). The catalysed reaction is a secondary alcohol + NAD(+) = a ketone + NADH + H(+). It catalyses the reaction S-(hydroxymethyl)glutathione + NADP(+) = S-formylglutathione + NADPH + H(+). The enzyme catalyses S-(hydroxymethyl)glutathione + NAD(+) = S-formylglutathione + NADH + H(+). It carries out the reaction 20-oxo-(5Z,8Z,11Z,14Z)-eicosatetraenoate + NAD(+) + H2O = (5Z,8Z,11Z,14Z)-eicosatetraenedioate + NADH + 2 H(+). The catalysed reaction is 20-hydroxy-(5Z,8Z,11Z,14Z)-eicosatetraenoate + NAD(+) = 20-oxo-(5Z,8Z,11Z,14Z)-eicosatetraenoate + NADH + H(+). It catalyses the reaction S-nitrosoglutathione + NADH + H(+) = S-(hydroxysulfenamide)glutathione + NAD(+). Its function is as follows. Catalyzes the oxidation of long-chain primary alcohols and the oxidation of S-(hydroxymethyl) glutathione. Also oxidizes long chain omega-hydroxy fatty acids, such as 20-HETE, producing both the intermediate aldehyde, 20-oxoarachidonate and the end product, a dicarboxylic acid, (5Z,8Z,11Z,14Z)-eicosatetraenedioate. Class-III ADH is remarkably ineffective in oxidizing ethanol. Required for clearance of cellular formaldehyde, a cytotoxic and carcinogenic metabolite that induces DNA damage. Also acts as a S-nitroso-glutathione reductase by catalyzing the NADH-dependent reduction of S-nitrosoglutathione, thereby regulating protein S-nitrosylation. The polypeptide is Alcohol dehydrogenase class-3 (Mus musculus (Mouse)).